The primary structure comprises 292 residues: METKTAKLLDGKAIAAKIQQELSVAITQLQPEIGRPPGLAVLMVGDNPASAAYVRNKEKACAKVGIASFGKHFPAETTFRELEKVIAALNDDERVDGILVQLPLPDHLDAVALLHQIDPDKDADGLHPVNLGRLVRGEIGLRSCTPDGVMRLLQEYEIPLQGKQAVVVGRSILVGKPMALMLLEADATVTIAHSRSHDLKSITQNADILIAAAGRPGLITADMVKPGAVVVDVGMNRVTDASGKSRLIGDVDFESTAGVAGFITPVPGGVGPMTVAILLQNTFTSYSRAAKK.

Residues 169–171 (GRS) and Ser-194 contribute to the NADP(+) site.

Belongs to the tetrahydrofolate dehydrogenase/cyclohydrolase family. As to quaternary structure, homodimer.

It catalyses the reaction (6R)-5,10-methylene-5,6,7,8-tetrahydrofolate + NADP(+) = (6R)-5,10-methenyltetrahydrofolate + NADPH. The enzyme catalyses (6R)-5,10-methenyltetrahydrofolate + H2O = (6R)-10-formyltetrahydrofolate + H(+). It functions in the pathway one-carbon metabolism; tetrahydrofolate interconversion. Its function is as follows. Catalyzes the oxidation of 5,10-methylenetetrahydrofolate to 5,10-methenyltetrahydrofolate and then the hydrolysis of 5,10-methenyltetrahydrofolate to 10-formyltetrahydrofolate. The sequence is that of Bifunctional protein FolD from Nostoc punctiforme (strain ATCC 29133 / PCC 73102).